Here is a 105-residue protein sequence, read N- to C-terminus: uncharacterized protein (105 aa).

This is an uncharacterized protein from Escherichia coli (Bacteriophage T4).